Here is a 389-residue protein sequence, read N- to C-terminus: uncharacterized protein (389 aa).

WD repeat units follow at residues serine 11–lysine 53, serine 146–alanine 186, and alanine 289–proline 330. Residue serine 351 is modified to Phosphoserine. The interval glutamine 361 to tyrosine 389 is disordered. Over residues arginine 368–tyrosine 389 the composition is skewed to basic residues.

This is an uncharacterized protein from Saccharomyces cerevisiae (strain ATCC 204508 / S288c) (Baker's yeast).